A 54-amino-acid polypeptide reads, in one-letter code: Hemolytic toxin (54 aa).

The tract at residues 3-12 (ALAGTIIAGA) is plays an important role in the hemolytic activity. The segment at 11–30 (GASLGFQILDKVLGELGKVS) is N-terminal region.

It belongs to the actinoporin family. Sea anemone subfamily. As to quaternary structure, octamer or nonamer in membranes. Monomer in the soluble state.

Its subcellular location is the secreted. The protein localises to the nematocyst. The protein resides in the target cell membrane. Its function is as follows. Pore-forming protein that forms cations-selective hydrophilic pores of around 1 nm and causes cytolysis. Pore formation is a multi-step process that involves specific recognition of membrane sphingomyelin (but neither cholesterol nor phosphatidylcholine) using aromatic rich region and adjacent phosphocholine (POC) binding site, firm binding to the membrane (mainly driven by hydrophobic interactions) accompanied by the transfer of the N-terminal region to the lipid-water interface and finally pore formation after oligomerization of monomers. The polypeptide is Hemolytic toxin (Heteractis magnifica (Magnificent sea anemone)).